A 627-amino-acid chain; its full sequence is Carene synthase 3, chloroplastic (627 aa).

The N-terminal 36 residues, 1–36 (MSVISIVPLASKSCLYKSLMSSTHELKALCRPIATL), are a transit peptide targeting the chloroplast. Asp-378, Asp-382, and Asp-530 together coordinate Mg(2+). Positions 378-382 (DDMYD) match the DDXXD motif motif.

Belongs to the terpene synthase family. Tpsd subfamily. It depends on Mg(2+) as a cofactor. The cofactor is Mn(2+).

It localises to the plastid. The protein resides in the chloroplast. It catalyses the reaction (2E)-geranyl diphosphate = (+)-car-3-ene + diphosphate. Its pathway is terpene metabolism; oleoresin biosynthesis. Functionally, terpene synthase (TPS) involved in defensive oleoresin formation in conifers in response to insect attack or other injury. In Picea sitchensis (Sitka spruce), this protein is Carene synthase 3, chloroplastic (TPS-3car3).